Here is an 80-residue protein sequence, read N- to C-terminus: Metallothionein-like protein type 2 MET1 (80 aa).

Belongs to the metallothionein superfamily. Type 15 family.

Its function is as follows. Metallothioneins have a high content of cysteine residues that bind various heavy metals. The protein is Metallothionein-like protein type 2 MET1 (MET1) of Fragaria ananassa (Strawberry).